A 1486-amino-acid chain; its full sequence is Chromosome partition protein MukB (1486 aa).

Residue 34-41 participates in ATP binding; sequence GGNGAGKS. Coiled coils occupy residues 326–418, 444–480, and 509–603; these read LEAD…QYNQ, LETFQAKELEATEKMLSLEQKMSMAQTAHSQFEQAYQ, and RHLA…RAPV. Positions 666–783 are flexible hinge; the sequence is PGGSEDQRLN…EVPLFGRAAR (118 aa). Coiled coils occupy residues 835 to 923, 977 to 1115, and 1209 to 1266; these read EAEI…AKLE, EMLS…TAKA, and VEAI…QNVS.

Belongs to the SMC family. MukB subfamily. In terms of assembly, homodimerization via its hinge domain. Binds to DNA via its C-terminal region. Interacts, and probably forms a ternary complex, with MukE and MukF via its C-terminal region. The complex formation is stimulated by calcium or magnesium. Interacts with tubulin-related protein FtsZ.

Its subcellular location is the cytoplasm. It is found in the nucleoid. Plays a central role in chromosome condensation, segregation and cell cycle progression. Functions as a homodimer, which is essential for chromosome partition. Involved in negative DNA supercoiling in vivo, and by this means organize and compact chromosomes. May achieve or facilitate chromosome segregation by condensation DNA from both sides of a centrally located replisome during cell division. The polypeptide is Chromosome partition protein MukB (Escherichia coli O6:H1 (strain CFT073 / ATCC 700928 / UPEC)).